We begin with the raw amino-acid sequence, 209 residues long: MTKGILGRKIGMTQVFAENGDLIPVTVIEAAPNVVLQKKTSENDGYEAIQIGFDDKREKLANKPEKGHVAKAETAPKRFVKELRGVDMDAYEVGQEVKVDIFSNGEIVDVTGTSKGKGFQGAIKRHGQSRGPMSHGSRYHRRPGSMGPVDPNRVFKGKLLPGRMGGEQITVQNLEIVKVDAERNLLLVKGNVPGAKKSLVTVKSAVKSK.

Residues glycine 118 to asparagine 152 form a disordered region.

Belongs to the universal ribosomal protein uL3 family. In terms of assembly, part of the 50S ribosomal subunit. Forms a cluster with proteins L14 and L19.

Its function is as follows. One of the primary rRNA binding proteins, it binds directly near the 3'-end of the 23S rRNA, where it nucleates assembly of the 50S subunit. The polypeptide is Large ribosomal subunit protein uL3 (Bacillus licheniformis (strain ATCC 14580 / DSM 13 / JCM 2505 / CCUG 7422 / NBRC 12200 / NCIMB 9375 / NCTC 10341 / NRRL NRS-1264 / Gibson 46)).